The primary structure comprises 311 residues: Pyrimidine-specific ribonucleoside hydrolase RihA (311 aa).

His-240 is a catalytic residue.

This sequence belongs to the IUNH family. RihA subfamily.

Its function is as follows. Hydrolyzes cytidine or uridine to ribose and cytosine or uracil, respectively. The protein is Pyrimidine-specific ribonucleoside hydrolase RihA of Shigella flexneri serotype 5b (strain 8401).